A 243-amino-acid chain; its full sequence is 4-hydroxy-tetrahydrodipicolinate reductase (243 aa).

NAD(+)-binding positions include 9–14, 78–80, and 104–107; these read GANGKM, GTS, and APNF. The Proton donor/acceptor role is filled by His-134. His-135 is a (S)-2,3,4,5-tetrahydrodipicolinate binding site. The active-site Proton donor is Lys-138. 144–145 lines the (S)-2,3,4,5-tetrahydrodipicolinate pocket; it reads GT.

Belongs to the DapB family.

It localises to the cytoplasm. It carries out the reaction (S)-2,3,4,5-tetrahydrodipicolinate + NAD(+) + H2O = (2S,4S)-4-hydroxy-2,3,4,5-tetrahydrodipicolinate + NADH + H(+). The catalysed reaction is (S)-2,3,4,5-tetrahydrodipicolinate + NADP(+) + H2O = (2S,4S)-4-hydroxy-2,3,4,5-tetrahydrodipicolinate + NADPH + H(+). It participates in amino-acid biosynthesis; L-lysine biosynthesis via DAP pathway; (S)-tetrahydrodipicolinate from L-aspartate: step 4/4. Catalyzes the conversion of 4-hydroxy-tetrahydrodipicolinate (HTPA) to tetrahydrodipicolinate. This Legionella pneumophila (strain Paris) protein is 4-hydroxy-tetrahydrodipicolinate reductase.